Consider the following 395-residue polypeptide: Phosphopentomutase (395 aa).

Residues D14, D289, H294, D330, H331, and H342 each contribute to the Mn(2+) site.

The protein belongs to the phosphopentomutase family. Mn(2+) serves as cofactor.

It localises to the cytoplasm. It carries out the reaction 2-deoxy-alpha-D-ribose 1-phosphate = 2-deoxy-D-ribose 5-phosphate. It catalyses the reaction alpha-D-ribose 1-phosphate = D-ribose 5-phosphate. Its pathway is carbohydrate degradation; 2-deoxy-D-ribose 1-phosphate degradation; D-glyceraldehyde 3-phosphate and acetaldehyde from 2-deoxy-alpha-D-ribose 1-phosphate: step 1/2. Its function is as follows. Isomerase that catalyzes the conversion of deoxy-ribose 1-phosphate (dRib-1-P) and ribose 1-phosphate (Rib-1-P) to deoxy-ribose 5-phosphate (dRib-5-P) and ribose 5-phosphate (Rib-5-P), respectively. This chain is Phosphopentomutase, found in Mycoplasmopsis pulmonis (strain UAB CTIP) (Mycoplasma pulmonis).